Here is a 469-residue protein sequence, read N- to C-terminus: Dynein axonemal assembly factor 11 (469 aa).

LRR repeat units follow at residues 20-43, 44-65, 66-89, and 90-110; these read IFSLEEISLHQQDLERIEHIDKWC, RELKILYLQNNLIGKIENVSKL, KKLEYLNLALNNIEKIENLEGCES, and LQKLDLTVNFVGELSSINSLQ. The LRRCT domain maps to 114-135; it reads HLRELYLVGNPCAEYEGYRQYV. Composition is skewed to basic and acidic residues over residues 179–213 and 261–286; these read KRAAEREEARSKLQGKQKESRKTQEKKPGFDRRWY and SRLETHRYLEEKRKSKESSSEGELKK. Disordered regions lie at residues 179-290 and 436-469; these read KRAA…KPPR and KTQAQGPLQFHKNKVKDTEDSEDFIDNTDVPPLM.

This sequence belongs to the tilB family.

The protein resides in the cytoplasm. It localises to the cell projection. It is found in the cilium. The protein localises to the dynein axonemal particle. Its subcellular location is the flagellum. Its function is as follows. Involved in dynein arm assembly, is important for expression and transporting outer dynein arm (ODA) proteins from the cytoplasm to the cilia. The sequence is that of Dynein axonemal assembly factor 11 (dnaaf11) from Xenopus laevis (African clawed frog).